An 825-amino-acid polypeptide reads, in one-letter code: Tuftelin-interacting protein 11 (825 aa).

The tract at residues 1 to 135 (MSMSHLYGKD…RTFAGGIKSN (135 aa)) is disordered. The span at 11 to 25 (EDSDGVEMENFEITD) shows a compositional bias: acidic residues. 2 stretches are compositionally biased toward basic and acidic residues: residues 41 to 61 (QTKE…DERP) and 85 to 114 (PAAE…EAKK). Polar residues predominate over residues 122–135 (KPSQRTFAGGIKSN). One can recognise a G-patch domain in the interval 145–191 (TKGIGQKLLQKMGYVQGRGLGKNAQGIIAPIEAKQRKGKGAVGAYGS).

This sequence belongs to the TFP11/STIP family. As to quaternary structure, identified in the spliceosome C complex.

It localises to the nucleus. Functionally, involved in pre-mRNA splicing, specifically in spliceosome disassembly during late-stage splicing events. The sequence is that of Tuftelin-interacting protein 11 (tfip11) from Xenopus tropicalis (Western clawed frog).